A 239-amino-acid chain; its full sequence is Serine protease SplC (239 aa).

The first 36 residues, 1 to 36, serve as a signal peptide directing secretion; the sequence is MNKNIVIKSMAALAILTSVTGINAAVVEETQQIANA. Residues His-75, Asp-113, and Ser-193 each act as charge relay system in the active site.

Belongs to the peptidase S1B family.

The protein resides in the secreted. The sequence is that of Serine protease SplC (splC) from Staphylococcus aureus (strain USA300 / TCH1516).